Reading from the N-terminus, the 216-residue chain is UPF0502 protein VPA1223 (216 aa).

It belongs to the UPF0502 family.

The polypeptide is UPF0502 protein VPA1223 (Vibrio parahaemolyticus serotype O3:K6 (strain RIMD 2210633)).